The sequence spans 199 residues: Inactive glutathione S-transferase D3 (199 aa).

The GST N-terminal domain maps to 1–64 (MVGKALGLEF…YLVEKYGKDD (64 aa)). Glutathione is bound by residues 34 to 36 (HSI) and 48 to 50 (ESR). The GST C-terminal domain occupies 70–199 (DIQKQAVINQ…RIEEKQNAAK (130 aa)).

This sequence belongs to the GST superfamily. Delta family. Homodimer.

In terms of biological role, has no glutathione S-transferase activity. The sequence is that of Inactive glutathione S-transferase D3 from Drosophila melanogaster (Fruit fly).